A 252-amino-acid chain; its full sequence is Ubiquinone biosynthesis O-methyltransferase (252 aa).

Residues R41, G72, D93, and M136 each contribute to the S-adenosyl-L-methionine site.

The protein belongs to the methyltransferase superfamily. UbiG/COQ3 family.

It catalyses the reaction a 3-demethylubiquinol + S-adenosyl-L-methionine = a ubiquinol + S-adenosyl-L-homocysteine + H(+). It carries out the reaction a 3-(all-trans-polyprenyl)benzene-1,2-diol + S-adenosyl-L-methionine = a 2-methoxy-6-(all-trans-polyprenyl)phenol + S-adenosyl-L-homocysteine + H(+). It participates in cofactor biosynthesis; ubiquinone biosynthesis. Its function is as follows. O-methyltransferase that catalyzes the 2 O-methylation steps in the ubiquinone biosynthetic pathway. This chain is Ubiquinone biosynthesis O-methyltransferase, found in Rhizobium leguminosarum bv. trifolii (strain WSM2304).